A 241-amino-acid chain; its full sequence is DnaJ homolog subfamily B member 6 (241 aa).

An interaction with HSP70 region spans residues 2 to 146; sequence VDYYEVLGVQ…TGSFFSAFSG (145 aa). The J domain maps to 3–69; it reads DYYEVLGVQR…KKRDIYDKYG (67 aa). The interval 119 to 241 is interaction with KRT18; sequence FEDFFGNRRG…KEQLLRLDNK (123 aa). Residue Arg135 is modified to Omega-N-methylarginine.

As to quaternary structure, homooligomer. Interacts with BAG3, HSPB8 and STUB1. Interacts with ALKBH1. Interacts with HSP70, KRT18 and PTTG.

It localises to the cytoplasm. The protein localises to the perinuclear region. Its subcellular location is the nucleus. It is found in the myofibril. The protein resides in the sarcomere. It localises to the z line. Has a stimulatory effect on the ATPase activity of HSP70 in a dose-dependent and time-dependent manner and hence acts as a co-chaperone of HSP70. Plays an indispensable role in the organization of KRT8/KRT18 filaments. Acts as an endogenous molecular chaperone for neuronal proteins including huntingtin. Suppresses aggregation and toxicity of polyglutamine-containing, aggregation-prone proteins. Also reduces cellular toxicity and caspase-3 activity. The sequence is that of DnaJ homolog subfamily B member 6 from Macaca fascicularis (Crab-eating macaque).